A 353-amino-acid polypeptide reads, in one-letter code: O-antigen chain mannosyltransferase RfbU (353 aa).

Belongs to the glycosyltransferase group 1 family. Glycosyltransferase 4 subfamily.

It carries out the reaction alpha-L-rhamnosyl-(1-&gt;3)-alpha-D-galactosyl-1-diphospho-di-trans,octa-cis-undecaprenol + GDP-alpha-D-mannose = alpha-D-Man-(1-&gt;4)-alpha-L-Rha-(1-&gt;3)-alpha-D-Gal-di-trans,octa-cis-undecaprenyl diphosphate + GDP + H(+). The protein operates within bacterial outer membrane biogenesis; LPS O-antigen biosynthesis. Functionally, mannosyltransferase involved in the biosynthesis of the repeat unit of the lipopolysaccharide (LPS) O-antigen region. Catalyzes the addition of a mannose to the rhamnosyl-galactosyl-undecaprenyl diphosphate intermediate. This chain is O-antigen chain mannosyltransferase RfbU, found in Salmonella typhimurium (strain LT2 / SGSC1412 / ATCC 700720).